A 987-amino-acid chain; its full sequence is Vacuolar membrane protease (987 aa).

Over 1–14 (MATRKARNPLAFMP) the chain is Cytoplasmic. Residues 15–35 (WPVTILTTAMYLALIIPLLVI) form a helical membrane-spanning segment. Residues 36-384 (HHNVPPAPRT…AFAVFRLHTL (349 aa)) are Vacuolar-facing. N-linked (GlcNAc...) asparagine glycosylation is found at N51 and N117. Zn(2+) contacts are provided by H167 and D179. The active-site Proton acceptor is the E213. Zn(2+) contacts are provided by E214, E239, and H312. A helical transmembrane segment spans residues 385-405 (FALSVTLLIVAPLTLLVTSVI). Over 406-435 (LSRADKMYLFRSSVYSEINDDYIPLRGLRG) the chain is Cytoplasmic. A helical transmembrane segment spans residues 436-456 (FFRFPFLISIPTGVTVGLAYM). Over 457 to 466 (VTKVNPFIAH) the chain is Vacuolar. Residues 467–487 (SSSYAVWSMMISAWIFLAWFV) traverse the membrane as a helical segment. At 488 to 501 (SRVANSARPSAFHR) the chain is on the cytoplasmic side. A helical membrane pass occupies residues 502–522 (VYTWTWMFVLTWSLMVVCTVY). Residues 523–526 (EHEE) lie on the Vacuolar side of the membrane. Residues 527 to 547 (GLAGGYFIFFYFAGTFLATWI) traverse the membrane as a helical segment. Residues 548 to 649 (SYLELFALPT…WSGVLPRWTW (102 aa)) are Cytoplasmic-facing. The tract at residues 572–600 (STQGSRLAASGDEHQDDAAEEDPTESTSL) is disordered. The chain crosses the membrane as a helical span at residues 650 to 670 (LLQLLITAPVILMLIVPLALL). Residues 671 to 686 (TTSALSQTGQDGSPQL) lie on the Vacuolar side of the membrane. Residues 687–707 (LIYLFISCLTALLFAPMLPFI) form a helical membrane-spanning segment. Topologically, residues 708–715 (HRYTYHLP) are cytoplasmic. A helical membrane pass occupies residues 716–736 (IFLLFVFIGTMIYNLVAFPFA). Topologically, residues 737–987 (DSNRLKLFFL…KRSSLGALGS (251 aa)) are vacuolar. N781 and N871 each carry an N-linked (GlcNAc...) asparagine glycan.

It belongs to the peptidase M28 family. Zn(2+) is required as a cofactor.

Its subcellular location is the vacuole membrane. Functionally, may be involved in vacuolar sorting and osmoregulation. This Penicillium rubens (strain ATCC 28089 / DSM 1075 / NRRL 1951 / Wisconsin 54-1255) (Penicillium chrysogenum) protein is Vacuolar membrane protease.